A 166-amino-acid polypeptide reads, in one-letter code: Interferon gamma (166 aa).

The signal sequence occupies residues 1-23 (MNYTSYILAFQLCVILCSSGCNC). Gln-24 carries the post-translational modification Pyrrolidone carboxylic acid. N-linked (GlcNAc...) asparagine glycans are attached at residues Asn-39 and Asn-106.

The protein belongs to the type II (or gamma) interferon family. In terms of assembly, homodimer. Interacts with IFNGR1 (via extracellular domain); this interaction promotes IFNGR1 dimerization. Released primarily from activated T lymphocytes.

It localises to the secreted. Its function is as follows. Type II interferon produced by immune cells such as T-cells and NK cells that plays crucial roles in antimicrobial, antiviral, and antitumor responses by activating effector immune cells and enhancing antigen presentation. Primarily signals through the JAK-STAT pathway after interaction with its receptor IFNGR1 to affect gene regulation. Upon IFNG binding, IFNGR1 intracellular domain opens out to allow association of downstream signaling components JAK2, JAK1 and STAT1, leading to STAT1 activation, nuclear translocation and transcription of IFNG-regulated genes. Many of the induced genes are transcription factors such as IRF1 that are able to further drive regulation of a next wave of transcription. Plays a role in class I antigen presentation pathway by inducing a replacement of catalytic proteasome subunits with immunoproteasome subunits. In turn, increases the quantity, quality, and repertoire of peptides for class I MHC loading. Increases the efficiency of peptide generation also by inducing the expression of activator PA28 that associates with the proteasome and alters its proteolytic cleavage preference. Up-regulates as well MHC II complexes on the cell surface by promoting expression of several key molecules such as cathepsins B/CTSB, H/CTSH, and L/CTSL. Participates in the regulation of hematopoietic stem cells during development and under homeostatic conditions by affecting their development, quiescence, and differentiation. This Canis lupus familiaris (Dog) protein is Interferon gamma (IFNG).